Consider the following 380-residue polypeptide: Protein phosphatase methylesterase 1 (380 aa).

The interval 1 to 38 (MSALEKSMHLGRLPSRPPLPGSGGSQSGAKMRMGPGRK) is disordered. S15 is modified (phosphoserine). An Asymmetric dimethylarginine; alternate modification is found at R16. R16 is modified (omega-N-methylarginine; alternate). S42 carries the phosphoserine modification. Active-site residues include S156 and D181. Residues 255 to 265 (IEEEEEDEEGS) show a composition bias toward acidic residues. The segment at 255–280 (IEEEEEDEEGSESVNKRKKEDDMETK) is disordered. Residues 268-280 (VNKRKKEDDMETK) show a composition bias toward basic and acidic residues. Residue H349 is part of the active site.

Belongs to the AB hydrolase superfamily. Binds PPP2CA and PPP2CB. Post-translationally, phosphorylated by SIK1 following increases in intracellular sodium, leading to dissociation from the protein phosphatase 2A (PP2A) complex and subsequent dephosphorylation of sodium/potassium-transporting ATPase ATP1A1.

The catalysed reaction is [phosphatase 2A protein]-C-terminal L-leucine methyl ester + H2O = [phosphatase 2A protein]-C-terminal L-leucine + methanol + H(+). Demethylates proteins that have been reversibly carboxymethylated. Demethylates PPP2CB (in vitro) and PPP2CA. Binding to PPP2CA displaces the manganese ion and inactivates the enzyme. The chain is Protein phosphatase methylesterase 1 (PPME1) from Bos taurus (Bovine).